A 173-amino-acid polypeptide reads, in one-letter code: Putative pre-16S rRNA nuclease (173 aa).

This sequence belongs to the YqgF nuclease family.

The protein resides in the cytoplasm. Functionally, could be a nuclease involved in processing of the 5'-end of pre-16S rRNA. The protein is Putative pre-16S rRNA nuclease of Rhodopirellula baltica (strain DSM 10527 / NCIMB 13988 / SH1).